Consider the following 310-residue polypeptide: Translocator protein BipD (310 aa).

Coiled coils occupy residues 127-171 (DPIL…LQDY) and 250-299 (DTAR…AIST).

The protein belongs to the invasin protein D family.

The protein resides in the secreted. In terms of biological role, required for invasion of epithelial cells, as well as for survival within host cells, escape from endocytic vesicles and subsequent actin-tail formation. Probably regulates the secretion of effectors BipB and BipC and their final integration into the target cell membrane. In Burkholderia mallei (strain NCTC 10247), this protein is Translocator protein BipD (bipD).